A 362-amino-acid chain; its full sequence is Large ribosomal subunit protein uL4A (362 aa).

S2 is subject to N-acetylserine. R95 is subject to Omega-N-methylarginine. Positions 277–362 (PSHIISTSDV…AVFTETLKHD (86 aa)) are C-terminal-extended nuclear localization signal.

It belongs to the universal ribosomal protein uL4 family. In terms of assembly, component of the large ribosomal subunit (LSU). Mature yeast ribosomes consist of a small (40S) and a large (60S) subunit. The 40S small subunit contains 1 molecule of ribosomal RNA (18S rRNA) and 33 different proteins (encoded by 57 genes). The large 60S subunit contains 3 rRNA molecules (25S, 5.8S and 5S rRNA) and 46 different proteins (encoded by 81 genes). uL4 is associated with the polypeptide exit tunnel. uL4 interacts with its chaperone ACL4 and the nuclear import receptor KAP104. Post-translationally, N-terminally acetylated by acetyltransferase NatA.

It is found in the cytoplasm. Its subcellular location is the nucleus. In terms of biological role, component of the ribosome, a large ribonucleoprotein complex responsible for the synthesis of proteins in the cell. The small ribosomal subunit (SSU) binds messenger RNAs (mRNAs) and translates the encoded message by selecting cognate aminoacyl-transfer RNA (tRNA) molecules. The large subunit (LSU) contains the ribosomal catalytic site termed the peptidyl transferase center (PTC), which catalyzes the formation of peptide bonds, thereby polymerizing the amino acids delivered by tRNAs into a polypeptide chain. The nascent polypeptides leave the ribosome through a tunnel in the LSU and interact with protein factors that function in enzymatic processing, targeting, and the membrane insertion of nascent chains at the exit of the ribosomal tunnel. uL4 participates in the regulation of the accumulation of its own mRNA. In Saccharomyces cerevisiae (strain ATCC 204508 / S288c) (Baker's yeast), this protein is Large ribosomal subunit protein uL4A.